Reading from the N-terminus, the 432-residue chain is Homogentisate 1,2-dioxygenase (432 aa).

His-286 (proton acceptor) is an active-site residue. Fe cation contacts are provided by His-329 and Glu-335. Homogentisate is bound by residues Tyr-344 and His-365. Fe cation is bound at residue His-365.

Belongs to the homogentisate dioxygenase family. Hexamer; dimer of trimers. The cofactor is Fe cation.

The catalysed reaction is homogentisate + O2 = 4-maleylacetoacetate + H(+). It functions in the pathway amino-acid degradation; L-phenylalanine degradation; acetoacetate and fumarate from L-phenylalanine: step 4/6. Involved in the catabolism of homogentisate (2,5-dihydroxyphenylacetate or 2,5-OH-PhAc), a central intermediate in the degradation of phenylalanine and tyrosine. Catalyzes the oxidative ring cleavage of the aromatic ring of homogentisate to yield maleylacetoacetate. This Bordetella pertussis (strain Tohama I / ATCC BAA-589 / NCTC 13251) protein is Homogentisate 1,2-dioxygenase.